We begin with the raw amino-acid sequence, 340 residues long: Heat-inducible transcription repressor HrcA (340 aa).

The protein belongs to the HrcA family.

Functionally, negative regulator of class I heat shock genes (grpE-dnaK-dnaJ and groELS operons). Prevents heat-shock induction of these operons. The protein is Heat-inducible transcription repressor HrcA of Mycoplasma capricolum subsp. capricolum (strain California kid / ATCC 27343 / NCTC 10154).